The chain runs to 591 residues: Aspartate--tRNA ligase (591 aa).

An L-aspartate-binding site is contributed by glutamate 173. Positions 197–200 (QLFK) are aspartate. Arginine 219 contacts L-aspartate. ATP contacts are provided by residues 219–221 (RDE) and glutamine 228. Histidine 446 contributes to the L-aspartate binding site. ATP is bound at residue glutamate 482. Arginine 489 contributes to the L-aspartate binding site. 534 to 537 (GLDR) provides a ligand contact to ATP.

It belongs to the class-II aminoacyl-tRNA synthetase family. Type 1 subfamily. As to quaternary structure, homodimer.

The protein localises to the cytoplasm. It carries out the reaction tRNA(Asp) + L-aspartate + ATP = L-aspartyl-tRNA(Asp) + AMP + diphosphate. Functionally, catalyzes the attachment of L-aspartate to tRNA(Asp) in a two-step reaction: L-aspartate is first activated by ATP to form Asp-AMP and then transferred to the acceptor end of tRNA(Asp). This is Aspartate--tRNA ligase from Limosilactobacillus fermentum (strain NBRC 3956 / LMG 18251) (Lactobacillus fermentum).